The chain runs to 568 residues: Proline--tRNA ligase (568 aa).

This sequence belongs to the class-II aminoacyl-tRNA synthetase family. ProS type 1 subfamily. In terms of assembly, homodimer.

The protein localises to the cytoplasm. It carries out the reaction tRNA(Pro) + L-proline + ATP = L-prolyl-tRNA(Pro) + AMP + diphosphate. Functionally, catalyzes the attachment of proline to tRNA(Pro) in a two-step reaction: proline is first activated by ATP to form Pro-AMP and then transferred to the acceptor end of tRNA(Pro). As ProRS can inadvertently accommodate and process non-cognate amino acids such as alanine and cysteine, to avoid such errors it has two additional distinct editing activities against alanine. One activity is designated as 'pretransfer' editing and involves the tRNA(Pro)-independent hydrolysis of activated Ala-AMP. The other activity is designated 'posttransfer' editing and involves deacylation of mischarged Ala-tRNA(Pro). The misacylated Cys-tRNA(Pro) is not edited by ProRS. The chain is Proline--tRNA ligase from Halorhodospira halophila (strain DSM 244 / SL1) (Ectothiorhodospira halophila (strain DSM 244 / SL1)).